A 466-amino-acid chain; its full sequence is tRNA modification GTPase MnmE (466 aa).

Residues Arg22, Glu87, and Arg126 each contribute to the (6S)-5-formyl-5,6,7,8-tetrahydrofolate site. The TrmE-type G domain maps to 222–382 (GWRTVIVGRP…LTELIRRMVY (161 aa)). A K(+)-binding site is contributed by Asn232. GTP is bound by residues 232 to 237 (NVGKSS), 251 to 257 (TEIPGTT), and 276 to 279 (DTAG). Ser236 serves as a coordination point for Mg(2+). K(+) contacts are provided by Thr251, Ile253, and Thr256. Position 257 (Thr257) interacts with Mg(2+). Residue Lys466 coordinates (6S)-5-formyl-5,6,7,8-tetrahydrofolate.

It belongs to the TRAFAC class TrmE-Era-EngA-EngB-Septin-like GTPase superfamily. TrmE GTPase family. Homodimer. Heterotetramer of two MnmE and two MnmG subunits. The cofactor is K(+).

Its subcellular location is the cytoplasm. Its function is as follows. Exhibits a very high intrinsic GTPase hydrolysis rate. Involved in the addition of a carboxymethylaminomethyl (cmnm) group at the wobble position (U34) of certain tRNAs, forming tRNA-cmnm(5)s(2)U34. The protein is tRNA modification GTPase MnmE of Heliobacterium modesticaldum (strain ATCC 51547 / Ice1).